The chain runs to 1499 residues: DNA-directed RNA polymerase subunit beta' (1499 aa).

Cys-67, Cys-69, Cys-82, and Cys-85 together coordinate Zn(2+). Positions 497, 499, and 501 each coordinate Mg(2+). Zn(2+)-binding residues include Cys-865, Cys-940, Cys-947, and Cys-950. Residues 1475-1499 form a disordered region; sequence YEPSQRAYQEDEYAKKEDGEIAIDD. Positions 1482-1493 are enriched in basic and acidic residues; that stretch reads YQEDEYAKKEDG.

The protein belongs to the RNA polymerase beta' chain family. In terms of assembly, the RNAP catalytic core consists of 2 alpha, 1 beta, 1 beta' and 1 omega subunit. When a sigma factor is associated with the core the holoenzyme is formed, which can initiate transcription. The cofactor is Mg(2+). Requires Zn(2+) as cofactor.

The catalysed reaction is RNA(n) + a ribonucleoside 5'-triphosphate = RNA(n+1) + diphosphate. Functionally, DNA-dependent RNA polymerase catalyzes the transcription of DNA into RNA using the four ribonucleoside triphosphates as substrates. The protein is DNA-directed RNA polymerase subunit beta' of Chloroherpeton thalassium (strain ATCC 35110 / GB-78).